Reading from the N-terminus, the 309-residue chain is uncharacterized protein (309 aa).

Belongs to the OprB family.

This is an uncharacterized protein from Aquifex aeolicus (strain VF5).